Consider the following 159-residue polypeptide: SsrA-binding protein (159 aa).

It belongs to the SmpB family.

It localises to the cytoplasm. Required for rescue of stalled ribosomes mediated by trans-translation. Binds to transfer-messenger RNA (tmRNA), required for stable association of tmRNA with ribosomes. tmRNA and SmpB together mimic tRNA shape, replacing the anticodon stem-loop with SmpB. tmRNA is encoded by the ssrA gene; the 2 termini fold to resemble tRNA(Ala) and it encodes a 'tag peptide', a short internal open reading frame. During trans-translation Ala-aminoacylated tmRNA acts like a tRNA, entering the A-site of stalled ribosomes, displacing the stalled mRNA. The ribosome then switches to translate the ORF on the tmRNA; the nascent peptide is terminated with the 'tag peptide' encoded by the tmRNA and targeted for degradation. The ribosome is freed to recommence translation, which seems to be the essential function of trans-translation. The sequence is that of SsrA-binding protein from Acidiphilium cryptum (strain JF-5).